Here is a 275-residue protein sequence, read N- to C-terminus: Adenylate kinase (275 aa).

54 to 59 (GAGKGT) contributes to the ATP binding site. Positions 74-103 (ATGDMLRSQVAKKTPLGREAKKIMDQGGLV) are NMP. AMP-binding positions include Thr-75, Arg-80, 101-103 (GLV), 130-133 (GFPR), and Gln-137. The segment at 171–208 (GRLVHPASGRSYHRVFNPPKAEMKDDITGEPLVSRSDD) is LID. ATP is bound by residues Arg-172 and 181–182 (SY). AMP-binding residues include Arg-205 and Arg-216. An ATP-binding site is contributed by Gln-244.

Belongs to the adenylate kinase family. AK2 subfamily. Monomer.

Its subcellular location is the cytoplasm. The protein localises to the cytosol. It is found in the mitochondrion intermembrane space. The catalysed reaction is AMP + ATP = 2 ADP. In terms of biological role, catalyzes the reversible transfer of the terminal phosphate group between ATP and AMP. Plays an important role in cellular energy homeostasis and in adenine nucleotide metabolism. Adenylate kinase activity is critical for regulation of the phosphate utilization and the AMP de novo biosynthesis pathways. The protein is Adenylate kinase (adk1) of Sclerotinia sclerotiorum (strain ATCC 18683 / 1980 / Ss-1) (White mold).